The primary structure comprises 612 residues: MSKVIGIDLGTTNSCVAVLEGGEPTVIANAEGNRTTPSVVAFKNGERQVGEVAKRQSITNPNTIMSVKRHMGTDYKVEIEGKDYTPQEVSAIILQHLKAYAESYLGETVSKAVITVPAYFNDAERQATKDAGKIAGLEVERIINEPTAAALAYGLDKTDEDQTILVYDLGGGTFDVSVLELGDGVFEVRSTAGDNRLGGDDFDQVIIDHLVAEFKKENGIDLSKDKMALQRLKDAAEKAKKDLSGVSSTQISLPFITAGEAGPLHLELTLTRAKFEELSAHLVERTMAPVRQALQDADLSASEIDKVILVGGSTRIPAVQEAIKKETGKEAHKGVNPDEVVALGAAIQGGVITGDVKDVVLLDVTPLSLGIETMGGVFTKLIDRNTTIPTSKSQVFSTAADNQTAVDIHVLQGERPMSADNKTLGRFQLTDIPPAPRGVPQIEVSFDIDKNGIVNVRAKDLGTGKEQNITIKSSSGLSDDEIERMVKEAEENADADAKRKEEIEVRNEADQLVFQTEKTLKDLEGKVDEEQVKKANDAKDALKAAIEKNEIEDIKAKKDELQTIVQELSMKLYEEAAKAQQAEGGANAEGKKADDNVVDAEYEEVKDDETKK.

The residue at position 173 (Thr173) is a Phosphothreonine; by autocatalysis. Positions 576-612 are disordered; it reads AAKAQQAEGGANAEGKKADDNVVDAEYEEVKDDETKK. Residues 578–588 are compositionally biased toward low complexity; that stretch reads KAQQAEGGANA. Residues 596 to 612 are compositionally biased toward acidic residues; sequence NVVDAEYEEVKDDETKK.

It belongs to the heat shock protein 70 family.

Acts as a chaperone. The protein is Chaperone protein DnaK of Bacillus velezensis (strain DSM 23117 / BGSC 10A6 / LMG 26770 / FZB42) (Bacillus amyloliquefaciens subsp. plantarum).